The sequence spans 225 residues: Claudin-17 (225 aa).

Residues 1 to 7 are Cytoplasmic-facing; the sequence is MAFYPLQ. The helical transmembrane segment at 8–28 threads the bilayer; sequence IAGLVLGFLGMVGTLATTLLP. Topologically, residues 29 to 81 are extracellular; sequence QWRVSAFIGSNIIVFERIWEGLWMNCVRQAKARLQCKFYSSMLALSPALEAAR. The chain crosses the membrane as a helical span at residues 82–102; it reads ALMCVAVALSLIALIIGICGM. Residues 103 to 124 lie on the Cytoplasmic side of the membrane; that stretch reads KKIQCTGSNERAKAYLLGTSGV. A helical membrane pass occupies residues 125–145; it reads LFILTGIFVLIPVCWTANIII. Topologically, residues 146–164 are extracellular; sequence RDFYNPAVHVGQKRELGAA. The helical transmembrane segment at 165 to 185 threads the bilayer; sequence LFLGWASVAVLFIAGGLLCGF. Residues 186–225 are Cytoplasmic-facing; the sequence is CCCNRKKQRDGYPAPRPSMPRTDERRRNMTRQSETPTSYV. The segment at 194-225 is disordered; the sequence is RDGYPAPRPSMPRTDERRRNMTRQSETPTSYV. Residues 215–225 show a composition bias toward polar residues; sequence TRQSETPTSYV.

The protein belongs to the claudin family. As to quaternary structure, does not form homotypic polymeric strands and it is not sufficient to form tight junctions by its own. Interacts with OCLN.

It is found in the cell junction. The protein localises to the tight junction. It localises to the cell membrane. It catalyses the reaction chloride(in) = chloride(out). The catalysed reaction is hydrogencarbonate(in) = hydrogencarbonate(out). The enzyme catalyses bromide(in) = bromide(out). It carries out the reaction iodide(out) = iodide(in). It catalyses the reaction fluoride(in) = fluoride(out). The catalysed reaction is nitrate(in) = nitrate(out). The enzyme catalyses thiocyanate(in) = thiocyanate(out). In terms of biological role, channel-forming tight junction protein with selectivity for anions, including chloride and hydrogencarbonate, and for solutes smaller than 9 Angstrom in diameter. In the kidney proximal tubule, may be involved in quantitative reabsorption of filtered anions. Does not affect water permeability. The sequence is that of Claudin-17 (CLDN17) from Sus scrofa (Pig).